A 116-amino-acid polypeptide reads, in one-letter code: Ribonuclease P protein component 2 (116 aa).

It belongs to the eukaryotic/archaeal RNase P protein component 2 family. As to quaternary structure, consists of a catalytic RNA component and at least 4-5 protein subunits.

It localises to the cytoplasm. The enzyme catalyses Endonucleolytic cleavage of RNA, removing 5'-extranucleotides from tRNA precursor.. Its function is as follows. Part of ribonuclease P, a protein complex that generates mature tRNA molecules by cleaving their 5'-ends. The protein is Ribonuclease P protein component 2 of Methanosarcina mazei (strain ATCC BAA-159 / DSM 3647 / Goe1 / Go1 / JCM 11833 / OCM 88) (Methanosarcina frisia).